Reading from the N-terminus, the 207-residue chain is MQHKQAMQTMALAAVCQAAWLVQQVARNGSCDEESMRCLLQGVLITDPNNAESVYPDRTLLREGYKTLVEQLGNNRNPKNVELTRYVIGMVALERKLSGKRRVLSALAERVSQVKRQAFHFDLLTDTVLSNLAGIYSDQISNLGPRIQVSGAPLYLQQPQVQHKIRALLLAGIRACVLWRQLGGRRRQILFFRKKVIAAAEAALRQL.

This sequence belongs to the HflD family.

The protein localises to the cytoplasm. Its subcellular location is the cell inner membrane. This is High frequency lysogenization protein HflD homolog from Tolumonas auensis (strain DSM 9187 / NBRC 110442 / TA 4).